Reading from the N-terminus, the 218-residue chain is Mitochondrial import inner membrane translocase subunit TIM17-1 (218 aa).

The next 4 helical transmembrane spans lie at 19 to 36 (VGGA…YHLI), 66 to 82 (FSVW…ALVY), 89 to 105 (PWNS…FLSL), and 116 to 133 (ALVG…GIML).

It belongs to the Tim17/Tim22/Tim23 family. As to quaternary structure, component of the TIM17:23 complex at least composed of TIM23, TIM17 and TIM50. The complex interacts with the TIM44 component of the PAM complex. As to expression, expressed in flowers, leaves and cotyledons, and at very low levels in roots.

The protein localises to the mitochondrion inner membrane. Essential component of the TIM17:23 complex, a complex that mediates the translocation of transit peptide-containing proteins across the mitochondrial inner membrane. Links the inner and outer membranes. In Arabidopsis thaliana (Mouse-ear cress), this protein is Mitochondrial import inner membrane translocase subunit TIM17-1 (TIM17-1).